The primary structure comprises 286 residues: Movement protein (286 aa).

It belongs to the tenuiviruses pc4 protein family. Interacts with the rice proteins DJA6 and HSP17.9A.

Its subcellular location is the host cytoplasm. Transports viral genome to neighboring plant cells directly through plasmosdesmata, without any budding. The movement protein allows efficient cell to cell propagation, by bypassing the host cell wall barrier. This is Movement protein from Avena sativa (Oat).